The chain runs to 186 residues: Glutathione-independent glyoxalase DJR-1.2 (186 aa).

Catalysis depends on residues Glu20, Cys105, and His124.

The protein belongs to the peptidase C56 family. DJ-1 subfamily. In terms of tissue distribution, expressed in various tissues, including pharyngeal muscles, pharynx-intestinal valve, ventral nerve cord, spermatheca, rectal gland, inner labial (IL) cells of head neurons, phasmid (PHA/PHB) neurons in tail and supporting sheath/socket cells, as well as in head mesodermal cells (HMC), excretory canals and coelomocytes.

The protein resides in the cytoplasm. The catalysed reaction is methylglyoxal + H2O = (R)-lactate + H(+). In terms of biological role, catalyzes the conversion of methylglyoxal (MG) or glyoxal (GO) to D-lactate or glycolic acid respectively in a single glutathione (GSH)-independent step. May play a role in detoxifying endogenously produced glyoxals. Involved in protection against glyoxal-induced cell death. Protects dopaminergic neurons from glyoxal-dependent neuronal degeneration. The sequence is that of Glutathione-independent glyoxalase DJR-1.2 from Caenorhabditis elegans.